The primary structure comprises 110 residues: MLTKITFFERFEQDILSGAKTITLRNEAESHVFAGQILPVSTFEADRWFCDIKVIEVVPVLFSALTEQHAAQENMTLPELRRVIQEIYPGLEQLFQIHFCVVNTRAHPIN.

An ASCH domain is found at 6–93; that stretch reads TFFERFEQDI…IQEIYPGLEQ (88 aa). The active-site Proton acceptor is the Lys20. Residue Thr23 is the Nucleophile of the active site. Glu73 acts as the Proton donor in catalysis.

The protein belongs to the N(4)-acetylcytidine amidohydrolase family.

It carries out the reaction N(4)-acetylcytidine + H2O = cytidine + acetate + H(+). The catalysed reaction is N(4)-acetyl-2'-deoxycytidine + H2O = 2'-deoxycytidine + acetate + H(+). It catalyses the reaction N(4)-acetylcytosine + H2O = cytosine + acetate + H(+). Functionally, catalyzes the hydrolysis of N(4)-acetylcytidine (ac4C). This is N(4)-acetylcytidine amidohydrolase from Shewanella sp. (strain ANA-3).